A 619-amino-acid chain; its full sequence is 1-deoxy-D-xylulose-5-phosphate synthase (619 aa).

Thiamine diphosphate contacts are provided by residues H74 and G115–S117. D146 is a Mg(2+) binding site. Thiamine diphosphate contacts are provided by residues G147–A148, N175, and Y285. N175 contributes to the Mg(2+) binding site. The segment at E289–C312 is disordered. Over residues A302–C312 the composition is skewed to basic and acidic residues. E365 lines the thiamine diphosphate pocket.

Belongs to the transketolase family. DXPS subfamily. In terms of assembly, homodimer. It depends on Mg(2+) as a cofactor. The cofactor is thiamine diphosphate.

The catalysed reaction is D-glyceraldehyde 3-phosphate + pyruvate + H(+) = 1-deoxy-D-xylulose 5-phosphate + CO2. It participates in metabolic intermediate biosynthesis; 1-deoxy-D-xylulose 5-phosphate biosynthesis; 1-deoxy-D-xylulose 5-phosphate from D-glyceraldehyde 3-phosphate and pyruvate: step 1/1. In terms of biological role, catalyzes the acyloin condensation reaction between C atoms 2 and 3 of pyruvate and glyceraldehyde 3-phosphate to yield 1-deoxy-D-xylulose-5-phosphate (DXP). The sequence is that of 1-deoxy-D-xylulose-5-phosphate synthase from Clostridium botulinum (strain Eklund 17B / Type B).